The primary structure comprises 768 residues: Degenerin mec-4 (768 aa).

Residues 1-109 (MSWMQNLKNY…GEAPNVYYRA (109 aa)) are Cytoplasmic-facing. Residues 110-130 (VWVMLFLGCMIMLYLNAQSVL) traverse the membrane as a helical segment. Residues 131 to 718 (DKYNRNEKIV…VNLLADFGGQ (588 aa)) lie on the Extracellular side of the membrane. Disordered stretches follow at residues 187–221 (AGGN…GKRD) and 237–260 (GSQG…ETTT). Residues 189-200 (GNKEHDGEKEVI) show a composition bias toward basic and acidic residues. The segment covering 203 to 212 (APTTPAPTTK) has biased composition (low complexity). Residues 243 to 252 (EQEDKDDEKE) show a composition bias toward acidic residues. N336, N357, N480, N484, N503, and N671 each carry an N-linked (GlcNAc...) asparagine glycan. The helical transmembrane segment at 719–739 (LGLWCGISFLTCCEFVFLFLE) threads the bilayer. Residues 740–768 (TAYMSAEHNYSLYKKKKAEKAKKVASGSF) lie on the Cytoplasmic side of the membrane.

It belongs to the amiloride-sensitive sodium channel (TC 1.A.6) family. In terms of assembly, the channel is probably composed of at least the mec-2, mec-4, mec-6 and mec-10 subunits.

The protein localises to the membrane. Functionally, probable sodium channel subunit. May be needed for mechanosensory transduction (touch sensitivity). Negatively regulates the turning step of male mating behavior. This is Degenerin mec-4 (mec-4) from Caenorhabditis briggsae.